The chain runs to 700 residues: Methionine--tRNA ligase (700 aa).

The 'HIGH' region signature appears at 14–24; sequence PYANGPVHLGH. Residues C146, C149, C159, and C162 each contribute to the Zn(2+) site. A 'KMSKS' region motif is present at residues 343–347; that stretch reads KFSKS. K346 is a binding site for ATP. One can recognise a tRNA-binding domain in the interval 599–700; that stretch reads EFEKIDLRVA…GDSIVGKPVK (102 aa).

This sequence belongs to the class-I aminoacyl-tRNA synthetase family. MetG type 1 subfamily. In terms of assembly, homodimer. Requires Zn(2+) as cofactor.

It localises to the cytoplasm. It catalyses the reaction tRNA(Met) + L-methionine + ATP = L-methionyl-tRNA(Met) + AMP + diphosphate. Its function is as follows. Is required not only for elongation of protein synthesis but also for the initiation of all mRNA translation through initiator tRNA(fMet) aminoacylation. In Chloroherpeton thalassium (strain ATCC 35110 / GB-78), this protein is Methionine--tRNA ligase.